A 1385-amino-acid chain; its full sequence is DNA-directed RNA polymerase subunit beta'' (1385 aa).

Zn(2+) contacts are provided by cysteine 224, cysteine 294, cysteine 301, and cysteine 304.

It belongs to the RNA polymerase beta' chain family. RpoC2 subfamily. As to quaternary structure, in plastids the minimal PEP RNA polymerase catalytic core is composed of four subunits: alpha, beta, beta', and beta''. When a (nuclear-encoded) sigma factor is associated with the core the holoenzyme is formed, which can initiate transcription. Requires Zn(2+) as cofactor.

The protein resides in the plastid. Its subcellular location is the chloroplast. The enzyme catalyses RNA(n) + a ribonucleoside 5'-triphosphate = RNA(n+1) + diphosphate. Its function is as follows. DNA-dependent RNA polymerase catalyzes the transcription of DNA into RNA using the four ribonucleoside triphosphates as substrates. In Illicium oligandrum (Star anise), this protein is DNA-directed RNA polymerase subunit beta''.